The chain runs to 193 residues: MLRTLRPALVLFAALTLLTGVAYPLAVTGLAQVLFPEQANGSLIERGGTVIGSALIAQAFTGEAYFHPRPSMAGTGYEANNSGASNLGPTNQGLVDQVAARITAAKEANPGNYGGVPADLVTASGSGLDPHISQAAARWQAARVAKARGLDLQRAVALVYEFTSPRQLGILGEPRVNVLAINLALDERFPLAH.

The chain crosses the membrane as a helical span at residues Pro7–Val27.

The protein belongs to the KdpC family. The system is composed of three essential subunits: KdpA, KdpB and KdpC.

It is found in the cell inner membrane. In terms of biological role, part of the high-affinity ATP-driven potassium transport (or Kdp) system, which catalyzes the hydrolysis of ATP coupled with the electrogenic transport of potassium into the cytoplasm. This subunit acts as a catalytic chaperone that increases the ATP-binding affinity of the ATP-hydrolyzing subunit KdpB by the formation of a transient KdpB/KdpC/ATP ternary complex. This Rhodospirillum rubrum (strain ATCC 11170 / ATH 1.1.1 / DSM 467 / LMG 4362 / NCIMB 8255 / S1) protein is Potassium-transporting ATPase KdpC subunit.